Here is a 23-residue protein sequence, read N- to C-terminus: Basic phospholipase A2 Smb-N6 (23 aa).

It belongs to the phospholipase A2 family. Group II subfamily. Requires Ca(2+) as cofactor. Post-translationally, contains 7 disulfide bonds. In terms of tissue distribution, expressed by the venom gland.

It is found in the secreted. It carries out the reaction a 1,2-diacyl-sn-glycero-3-phosphocholine + H2O = a 1-acyl-sn-glycero-3-phosphocholine + a fatty acid + H(+). Its function is as follows. Snake venom phospholipase A2 (PLA2) that shows myotoxic activities. PLA2 catalyzes the calcium-dependent hydrolysis of the 2-acyl groups in 3-sn-phosphoglycerides. The sequence is that of Basic phospholipase A2 Smb-N6 from Sistrurus miliarius barbouri (Dusky pigmy rattlesnake).